The sequence spans 579 residues: Fatty-acid amide hydrolase 1 (579 aa).

Residues T9–L29 form a helical membrane-spanning segment. Residues R30 to D403 are Cytoplasmic-facing. K142 serves as the catalytic Charge relay system. Substrate-binding positions include M191, S217, and I238 to S241. S217 acts as the Charge relay system in catalysis. Residue S241 is the Acyl-ester intermediate of the active site. At S241 the chain carries Phosphoserine. The stretch at L404–L433 is an intramembrane region. At N434–S579 the chain is on the cytoplasmic side.

The protein belongs to the amidase family. Homodimer. Found in neuronal cells throughout the CNS. Expressed in liver and brain, and to a lesser extent in spleen, lung, kidney and testes.

The protein localises to the endoplasmic reticulum membrane. The protein resides in the golgi apparatus membrane. It catalyses the reaction N-(5Z,8Z,11Z,14Z-eicosatetraenoyl)-ethanolamine + H2O = ethanolamine + (5Z,8Z,11Z,14Z)-eicosatetraenoate. It carries out the reaction (9Z)-octadecenamide + H2O = (9Z)-octadecenoate + NH4(+). The catalysed reaction is 2-(5Z,8Z,11Z,14Z-eicosatetraenoyl)-glycerol + H2O = glycerol + (5Z,8Z,11Z,14Z)-eicosatetraenoate + H(+). The enzyme catalyses (9Z,12Z,15Z)-octadecatrienamide + H2O = (9Z,12Z,15Z)-octadecatrienoate + NH4(+). It catalyses the reaction (5Z,8Z,11Z,14Z)-eicosatetraenamide + H2O = (5Z,8Z,11Z,14Z)-eicosatetraenoate + NH4(+). It carries out the reaction (6Z)-octadecenamide + H2O = (6Z)-octadecenoate + NH4(+). The catalysed reaction is (15Z)-tetracosenamide + H2O = (15Z)-tetracosenoate + NH4(+). The enzyme catalyses (8Z,11Z,14Z)-eicosatrienamide + H2O = (8Z,11Z,14Z)-eicosatrienoate + NH4(+). It catalyses the reaction (11Z,14Z,17Z)-eicosatrienamide + H2O = (11Z,14Z,17Z)-eicosatrienoate + NH4(+). It carries out the reaction (11Z,14Z)-eicosadienamide + H2O = (11Z,14Z)-eicosadienoate + NH4(+). The catalysed reaction is (9Z,12Z)-octadecadienamide + H2O = (9Z,12Z)-octadecadienoate + NH4(+). The enzyme catalyses tetradecamide + H2O = tetradecanoate + NH4(+). It catalyses the reaction N-(9Z-octadecenoyl) ethanolamine + H2O = ethanolamine + (9Z)-octadecenoate. It carries out the reaction N-(9Z-octadecenoyl)-taurine + H2O = taurine + (9Z)-octadecenoate. The catalysed reaction is 1-O-methyl-(5Z,8Z,11Z,14Z)-eicosatetraenoate + H2O = methanol + (5Z,8Z,11Z,14Z)-eicosatetraenoate + H(+). The enzyme catalyses (11Z)-eicosenamide + H2O = (11Z)-eicosenoate + NH4(+). It catalyses the reaction N-(9Z-hexadecenoyl) ethanolamine + H2O = (9Z)-hexadecenoate + ethanolamine. It carries out the reaction N-octadecanoyl ethanolamine + H2O = octadecanoate + ethanolamine. The catalysed reaction is N-docosanoyl-ethanolamine + H2O = docosanoate + ethanolamine. The enzyme catalyses N-tetracosanoyl-taurine + H2O = tetracosanoate + taurine. It catalyses the reaction N-(15Z-tetracosenoyl)-ethanolamine + H2O = (15Z)-tetracosenoate + ethanolamine. It carries out the reaction N-docosanoyl-taurine + H2O = docosanoate + taurine. The catalysed reaction is N-(15Z-tetracosenoyl)-taurine + H2O = (15Z)-tetracosenoate + taurine. The enzyme catalyses N-tricosanoyl-taurine + H2O = tricosanoate + taurine. It catalyses the reaction (9Z)-octadecenoate + glycine = N-(9Z-octadecenoyl)glycine + H2O. It carries out the reaction N-(5Z,8Z,11Z,14Z)-eicosatetraenoyl-glycine + H2O = (5Z,8Z,11Z,14Z)-eicosatetraenoate + glycine. The catalysed reaction is N-(5Z,8Z,11Z,14Z-eicosatetraenoyl)-L-serine + H2O = (5Z,8Z,11Z,14Z)-eicosatetraenoate + L-serine. With respect to regulation, inhibited by trifluoromethyl ketone. Catalyzes the hydrolysis of endogenous amidated lipids like the sleep-inducing lipid oleamide ((9Z)-octadecenamide), the endocannabinoid anandamide (N-(5Z,8Z,11Z,14Z-eicosatetraenoyl)-ethanolamine), as well as other fatty amides, to their corresponding fatty acids, thereby regulating the signaling functions of these molecules. Hydrolyzes polyunsaturated substrate anandamide preferentially as compared to monounsaturated substrates. It can also catalyze the hydrolysis of the endocannabinoid 2-arachidonoylglycerol (2-(5Z,8Z,11Z,14Z-eicosatetraenoyl)-glycerol). FAAH cooperates with PM20D1 in the hydrolysis of amino acid-conjugated fatty acids such as N-fatty acyl glycine and N-fatty acyl-L-serine, thereby acting as a physiological regulator of specific subsets of intracellular, but not of extracellular, N-fatty acyl amino acids. This chain is Fatty-acid amide hydrolase 1 (Faah), found in Rattus norvegicus (Rat).